Consider the following 462-residue polypeptide: Fasciclin-like arabinogalactan protein 18 (462 aa).

The signal sequence occupies residues 1–25; the sequence is MDRCIYGCSVITIFFSFFFLLNASA. N-linked (GlcNAc...) asparagine glycosylation is found at Asn32, Asn77, and Asn293. 2 FAS1 domains span residues 40–185 and 271–414; these read NSNS…ERLL and VKDF…DGVL.

Belongs to the fasciclin-like AGP family.

Its subcellular location is the secreted. Its function is as follows. May be a cell surface adhesion protein. In Arabidopsis thaliana (Mouse-ear cress), this protein is Fasciclin-like arabinogalactan protein 18 (FLA18).